Reading from the N-terminus, the 371-residue chain is DNA replication and repair protein RecF (371 aa).

30–37 is a binding site for ATP; it reads GANAQGKT.

The protein belongs to the RecF family.

The protein resides in the cytoplasm. The RecF protein is involved in DNA metabolism; it is required for DNA replication and normal SOS inducibility. RecF binds preferentially to single-stranded, linear DNA. It also seems to bind ATP. This chain is DNA replication and repair protein RecF, found in Lacticaseibacillus casei (strain BL23) (Lactobacillus casei).